Consider the following 151-residue polypeptide: Linear element protein Mug20 (151 aa).

Residues 56-140 adopt a coiled-coil conformation; that stretch reads EEKLRALDKL…CAMEKLKMIE (85 aa).

Component of linear elements (LinEs), which are similar to synaptonemal complexes, at least composed of rec27, rec25, rec10 and mug20. Interacts with rec10.

The protein resides in the cytoplasm. It is found in the nucleus. It localises to the chromosome. Its function is as follows. During meiotic DNA recombination, binds to and may help activate DNA double-strand break (DSB) hotspot sites. The chain is Linear element protein Mug20 from Schizosaccharomyces pombe (strain 972 / ATCC 24843) (Fission yeast).